Here is a 591-residue protein sequence, read N- to C-terminus: Aspartate--tRNA(Asp/Asn) ligase (591 aa).

Position 176 (Glu-176) interacts with L-aspartate. The segment at Gln-200–Lys-203 is aspartate. Position 222 (Arg-222) interacts with L-aspartate. Residues Arg-222 to Glu-224 and Gln-231 contribute to the ATP site. An L-aspartate-binding site is contributed by His-450. Glu-484 contributes to the ATP binding site. Arg-491 contributes to the L-aspartate binding site. Gly-536–Arg-539 contacts ATP.

It belongs to the class-II aminoacyl-tRNA synthetase family. Type 1 subfamily. Homodimer.

The protein localises to the cytoplasm. The enzyme catalyses tRNA(Asx) + L-aspartate + ATP = L-aspartyl-tRNA(Asx) + AMP + diphosphate. Its function is as follows. Aspartyl-tRNA synthetase with relaxed tRNA specificity since it is able to aspartylate not only its cognate tRNA(Asp) but also tRNA(Asn). Reaction proceeds in two steps: L-aspartate is first activated by ATP to form Asp-AMP and then transferred to the acceptor end of tRNA(Asp/Asn). The protein is Aspartate--tRNA(Asp/Asn) ligase of Bacillus mycoides (strain KBAB4) (Bacillus weihenstephanensis).